We begin with the raw amino-acid sequence, 489 residues long: Dipeptide and tripeptide permease B (489 aa).

Residues 1–27 are Cytoplasmic-facing; sequence MNKPASIGLLQQPKPFFMIFFVELWER. Residues 28 to 48 form a helical membrane-spanning segment; it reads FGYYGVQGILAVYFVHKLGFS. The Periplasmic portion of the chain corresponds to 49–52; that stretch reads QEQA. Residues 53–73 form a helical membrane-spanning segment; that stretch reads FTTFGAFAALVYGLIAIGGYV. At 74–82 the chain is on the cytoplasmic side; it reads GDHLLGTKR. A helical membrane pass occupies residues 83–103; the sequence is TIVLGAIVLTVGYFMTGLSIL. At 104-106 the chain is on the periplasmic side; that stretch reads KPE. Residues 107–127 traverse the membrane as a helical segment; that stretch reads LIFYALGTIAVGNGLFKANPA. The Cytoplasmic portion of the chain corresponds to 128 to 146; it reads SLLSKCYPPKDPRLDGAFT. A helical transmembrane segment spans residues 147–167; it reads LFYMSINIGSLFSLAIAPVIA. The Periplasmic segment spans residues 168–171; it reads EKFG. Residues 172–192 traverse the membrane as a helical segment; that stretch reads YAVTYNICGIGLIIALLVYVL. The Cytoplasmic portion of the chain corresponds to 193–212; sequence YRNTVRNIGSEPDHRPINYK. 2 helical membrane-spanning segments follow: residues 213 to 233 and 234 to 254; these read NLLLVLAGTVTMVFVCAWLMH and NVKIANIVLIGLSVVIVFIFF. Topologically, residues 255–267 are cytoplasmic; it reads REAFKQDKVGRNK. Residues 268–288 form a helical membrane-spanning segment; the sequence is MFVAFILMLQAIVFFILYAQM. The Periplasmic portion of the chain corresponds to 289–311; that stretch reads PTSLNFFAINNVHHQLLGFNINP. A helical transmembrane segment spans residues 312–332; it reads VSFQALNPFWIVVASPILAAL. Over 333-350 the chain is Cytoplasmic; sequence YTHWGSRSKDLTMPAKFT. Residues 351 to 371 form a helical membrane-spanning segment; it reads VGMFLCSLGFLTAAAAGLWFA. The Periplasmic portion of the chain corresponds to 372–375; that stretch reads DEQG. The chain crosses the membrane as a helical span at residues 376–396; the sequence is LTSPWFIVLVYLFQSLGELMI. Residues 397-419 are Cytoplasmic-facing; sequence SALGLAMVAALVPQYLMGFILGM. Residues 420-440 form a helical membrane-spanning segment; that stretch reads WYLTQATSFLLGGYVAAFTAI. Residues 441 to 456 are Periplasmic-facing; the sequence is PEGITDPLETLPVYTN. A helical membrane pass occupies residues 457-477; the sequence is VFGKIGITTFIVAIIMAITVP. Residues 478-489 lie on the Cytoplasmic side of the membrane; it reads LLNRMMNGKQKA.

Belongs to the major facilitator superfamily. Proton-dependent oligopeptide transporter (POT/PTR) (TC 2.A.17) family. DtpB subfamily.

The protein resides in the cell inner membrane. Functionally, proton-dependent permease that transports di- and tripeptides. This chain is Dipeptide and tripeptide permease B, found in Photorhabdus asymbiotica subsp. asymbiotica (strain ATCC 43949 / 3105-77) (Xenorhabdus luminescens (strain 2)).